We begin with the raw amino-acid sequence, 974 residues long: Probable proton ATPase 1A (974 aa).

A compositionally biased stretch (basic and acidic residues) spans 1–23; that stretch reads MSSKKYELDAAAFEDKPESHSDA. Residues 1 to 61 form a disordered region; that stretch reads MSSKKYELDA…ATDLLPPSKG (61 aa). Residues 1–92 are Cytoplasmic-facing; sequence MSSKKYELDA…KTPSWLIYVR (92 aa). A helical transmembrane segment spans residues 93–112; it reads GLWGPMPAALWIAIIIEFAL. Over 113–117 the chain is Extracellular; that stretch reads ENWPD. A helical transmembrane segment spans residues 118 to 137; it reads GAILFAIQIANATIGWYETI. At 138–264 the chain is on the cytoplasmic side; sequence KAGDAVAALK…LGNIHVILRR (127 aa). A helical transmembrane segment spans residues 265–286; that stretch reads VMFSLCAISFMLCMCCFIYLLA. The Extracellular segment spans residues 287–294; it reads RFYETFRH. Residues 295-321 form a helical membrane-spanning segment; it reads ALQFAVVVLVVSIPIALEIVVTTTLAV. The Cytoplasmic portion of the chain corresponds to 322 to 630; sequence GSKHLSKHKI…AVHGATDAAR (309 aa). Aspartate 351 acts as the 4-aspartylphosphate intermediate in catalysis. Positions 605 and 609 each coordinate Mg(2+). A helical transmembrane segment spans residues 631–651; the sequence is AAADMVLTEPGLSVVVEAMLV. The Extracellular segment spans residues 652–661; it reads SREVFQRMLS. A helical membrane pass occupies residues 662 to 684; that stretch reads FLTYRISATLQLVCFFFIACFSL. The Cytoplasmic portion of the chain corresponds to 685-697; sequence TPKAYGSVDPHFQ. Residues 698–712 form a helical membrane-spanning segment; sequence FFHLPVLMFMLITLL. Topologically, residues 713–737 are extracellular; it reads NDGCLMTIGYDHVIPSERPQKWNLP. Aspartate 714 serves as a coordination point for Mg(2+). Residues 738–761 traverse the membrane as a helical segment; the sequence is VVFVSASILAAVACGSSLMLLWIG. At 762–812 the chain is on the cytoplasmic side; it reads LEGYSSQYYENSWFHRLGLAQLPQGKLVTMMYLKISISDFLTLFSSRTGGH. The chain crosses the membrane as a helical span at residues 813-840; that stretch reads FFFYMPPSPILFCGAIISLLVSTMAASF. Topologically, residues 841 to 868 are extracellular; the sequence is WHKSRPDNVLTEGLAWGQTNAEKLLPLW. Residues 869-887 traverse the membrane as a helical segment; sequence VWIYCIVWWFVQDVVKVLA. The Cytoplasmic portion of the chain corresponds to 888–974; it reads HICMDAVDLF…VNVYVSRDQK (87 aa). The segment covering 950-959 has biased composition (basic and acidic residues); it reads GLREDTHSPI. A disordered region spans residues 950–974; the sequence is GLREDTHSPIEEASPVNVYVSRDQK.

The protein belongs to the cation transport ATPase (P-type) (TC 3.A.3) family. Type IIIA subfamily.

It is found in the membrane. The catalysed reaction is ATP + H2O + H(+)(in) = ADP + phosphate + 2 H(+)(out). This is Probable proton ATPase 1A (H1A) from Leishmania donovani.